A 310-amino-acid polypeptide reads, in one-letter code: MARTNESSPYVEFDRKQWRTLRKSTPLVLTEDELYGLRGLGEQIDLEEVAEVYLPLARLIHLQVAARQRLFAATATFLGEKHPDRQVPFVIGVAGSVAVGKSTTARVLQALLARWDHHPRVDLVTTDGFLYPTRELQRRGIMHRKGFPESYDRRKLLRFVTEVKSGAEEVAAPVYSHTSYDIIPGQYHLIRQPDILIIEGLNVLQTGPRLMVSDLFDFSIYVDARIEDIEAWYIQRFLALRNTSFADPNAHFHHYSGLSDRDATIAAKEIWNSINHPNLVENILPTRPRATLVLRKDADHTINRLRLRKL.

95–102 (GSVAVGKS) contributes to the ATP binding site.

Belongs to the prokaryotic pantothenate kinase family.

The protein resides in the cytoplasm. It catalyses the reaction (R)-pantothenate + ATP = (R)-4'-phosphopantothenate + ADP + H(+). Its pathway is cofactor biosynthesis; coenzyme A biosynthesis; CoA from (R)-pantothenate: step 1/5. The protein is Pantothenate kinase of Rhodococcus erythropolis (strain PR4 / NBRC 100887).